A 153-amino-acid chain; its full sequence is Ribosome maturation factor RimP (153 aa).

Belongs to the RimP family.

The protein localises to the cytoplasm. Required for maturation of 30S ribosomal subunits. This is Ribosome maturation factor RimP from Glaesserella parasuis serovar 5 (strain SH0165) (Haemophilus parasuis).